Consider the following 270-residue polypeptide: S-adenosylmethionine decarboxylase proenzyme (270 aa).

Residue Ser-117 is the Schiff-base intermediate with substrate; via pyruvic acid of the active site. Pyruvic acid (Ser); by autocatalysis is present on Ser-117. The active-site Proton acceptor; for processing activity is the His-122. Cys-145 (proton donor; for catalytic activity) is an active-site residue.

This sequence belongs to the prokaryotic AdoMetDC family. Type 2 subfamily. Heterooctamer of four alpha and four beta chains arranged as a tetramer of alpha/beta heterodimers. It depends on pyruvate as a cofactor. Is synthesized initially as an inactive proenzyme. Formation of the active enzyme involves a self-maturation process in which the active site pyruvoyl group is generated from an internal serine residue via an autocatalytic post-translational modification. Two non-identical subunits are generated from the proenzyme in this reaction, and the pyruvate is formed at the N-terminus of the alpha chain, which is derived from the carboxyl end of the proenzyme. The post-translation cleavage follows an unusual pathway, termed non-hydrolytic serinolysis, in which the side chain hydroxyl group of the serine supplies its oxygen atom to form the C-terminus of the beta chain, while the remainder of the serine residue undergoes an oxidative deamination to produce ammonia and the pyruvoyl group blocking the N-terminus of the alpha chain.

The enzyme catalyses S-adenosyl-L-methionine + H(+) = S-adenosyl 3-(methylsulfanyl)propylamine + CO2. It functions in the pathway amine and polyamine biosynthesis; S-adenosylmethioninamine biosynthesis; S-adenosylmethioninamine from S-adenosyl-L-methionine: step 1/1. Catalyzes the decarboxylation of S-adenosylmethionine to S-adenosylmethioninamine (dcAdoMet), the propylamine donor required for the synthesis of the polyamines spermine and spermidine from the diamine putrescine. This Pseudoalteromonas translucida (strain TAC 125) protein is S-adenosylmethionine decarboxylase proenzyme.